Consider the following 228-residue polypeptide: LexA repressor (228 aa).

A DNA-binding region (H-T-H motif) is located at residues 26-46; it reads FDEMKEALDLRSKSGIHRLIT. Active-site for autocatalytic cleavage activity residues include Ser-149 and Lys-187.

The protein belongs to the peptidase S24 family. In terms of assembly, homodimer.

It catalyses the reaction Hydrolysis of Ala-|-Gly bond in repressor LexA.. Its function is as follows. Represses a number of genes involved in the response to DNA damage (SOS response), including recA and lexA. In the presence of single-stranded DNA, RecA interacts with LexA causing an autocatalytic cleavage which disrupts the DNA-binding part of LexA, leading to derepression of the SOS regulon and eventually DNA repair. This chain is LexA repressor, found in Jannaschia sp. (strain CCS1).